A 1375-amino-acid chain; its full sequence is Mediator of RNA polymerase II transcription subunit 13 (1375 aa).

Positions 1–51 (MKASEMARPPMRPGNPHAFASPATTPSRTASPNNAQGANVRTTQGGNQAGA) are disordered. Over residues 22–51 (PATTPSRTASPNNAQGANVRTTQGGNQAGA) the composition is skewed to polar residues. Coiled coils occupy residues 182–216 (ADDSNRRTSKKKAKMDSLEQNIEKWRMSVQRWLSR) and 297–324 (QLERDKILDMQRKAKKAEEDAMRRKDEA). Residues 313–324 (AEEDAMRRKDEA) are compositionally biased toward basic and acidic residues. Disordered regions lie at residues 313–333 (AEEDAMRRKDEAPGLYPSSPF), 350–370 (YPTPPDGIVPGTGISSTDTPS), 397–417 (YTTTDNQQHASTSPTFPAPLE), 537–581 (ATSP…PASL), 660–689 (RAVSDDSASDSESETSDMSEGSPEDPVDTH), 841–862 (QAKGQQRPPPRKPNESNAIPSN), and 1233–1285 (TPTT…AADP). Residues 397-411 (YTTTDNQQHASTSPT) are compositionally biased toward polar residues. Residues 666–685 (SASDSESETSDMSEGSPEDP) show a composition bias toward acidic residues. A compositionally biased stretch (polar residues) spans 1233-1259 (TPTTPAPSNSSAQANTNTPGSTPQTGV).

Belongs to the Mediator complex subunit 13 family. As to quaternary structure, component of the SRB8-11 complex, which itself associates with the Mediator complex.

The protein resides in the nucleus. Its function is as follows. Component of the SRB8-11 complex. The SRB8-11 complex is a regulatory module of the Mediator complex which is itself involved in regulation of basal and activated RNA polymerase II-dependent transcription. The SRB8-11 complex may be involved in the transcriptional repression of a subset of genes regulated by Mediator. It may inhibit the association of the Mediator complex with RNA polymerase II to form the holoenzyme complex. The polypeptide is Mediator of RNA polymerase II transcription subunit 13 (SSN2) (Phaeosphaeria nodorum (strain SN15 / ATCC MYA-4574 / FGSC 10173) (Glume blotch fungus)).